Reading from the N-terminus, the 197-residue chain is Adenylylsulfatase HINT3 (197 aa).

The tract at residues 14-43 is disordered; it reads NPPGPNPTRDPTLRVSDCSSGSSGDGKVES. Positions 51–158 constitute an HIT domain; sequence VFCKIIRGES…IPRKERDCLW (108 aa). Residues 143 to 147 carry the Histidine triad motif motif; the sequence is HTHIH. The Tele-AMP-histidine intermediate role is filled by H145. H147 contacts substrate.

It localises to the peroxisome. The enzyme catalyses adenosine 5'-phosphosulfate + H2O = sulfate + AMP + 2 H(+). Functionally, possesses adenylylsulfatase activity in vitro. The sequence is that of Adenylylsulfatase HINT3 from Arabidopsis thaliana (Mouse-ear cress).